Reading from the N-terminus, the 41-residue chain is Photosystem I reaction center subunit IX (41 aa).

The helical transmembrane segment at 7–27 threads the bilayer; it reads YLSTAPVLLTLWMTFTAGFII.

Belongs to the PsaJ family.

The protein localises to the plastid. It localises to the chloroplast thylakoid membrane. Its function is as follows. May help in the organization of the PsaE and PsaF subunits. The polypeptide is Photosystem I reaction center subunit IX (Thalassiosira pseudonana (Marine diatom)).